A 594-amino-acid polypeptide reads, in one-letter code: DNA ligase 2 (594 aa).

E250 is an ATP binding site. The active-site N6-AMP-lysine intermediate is K252. Residues R257, R273, E303, F343, R419, and K425 each coordinate ATP.

The protein belongs to the ATP-dependent DNA ligase family. Requires Mg(2+) as cofactor.

It catalyses the reaction ATP + (deoxyribonucleotide)n-3'-hydroxyl + 5'-phospho-(deoxyribonucleotide)m = (deoxyribonucleotide)n+m + AMP + diphosphate.. Its function is as follows. DNA ligase that seals nicks in double-stranded DNA during DNA replication, DNA recombination and DNA repair. The chain is DNA ligase 2 from Korarchaeum cryptofilum (strain OPF8).